We begin with the raw amino-acid sequence, 797 residues long: Kinesin-like protein KIF18B (797 aa).

Residues 11–352 (TVAVVVRVRP…LKYANRAKEI (342 aa)) form the Kinesin motor domain. 110 to 117 (GATGAGKT) contacts ATP. Positions 367-402 (ISKYATICEQLKTEVADLQAKLRAYEDAARDAGKQI) form a coiled coil. Disordered stretches follow at residues 412–476 (EEAV…PNRL), 528–564 (AAVS…PSVP), 579–640 (LSSP…KEPQ), and 730–797 (KGSS…SGPR). Over residues 594 to 608 (MSNTSRLETPHSLNT) the composition is skewed to polar residues. Positions 731 to 744 (GSSIPKPSSISKGS) are enriched in low complexity.

This sequence belongs to the TRAFAC class myosin-kinesin ATPase superfamily. Kinesin family.

The protein resides in the nucleus. The protein localises to the cytoplasm. Its subcellular location is the cytoskeleton. May play an important role in microtubule plus-end depolymerizing activity in mitotic cells. In Gallus gallus (Chicken), this protein is Kinesin-like protein KIF18B (KIF18B).